Consider the following 4731-residue polypeptide: Dynein axonemal heavy chain 8 (4731 aa).

Residues 1-145 (MESEEGNAEP…SKFRRSMTGI (145 aa)) form a disordered region. Over residues 9-55 (EPPPPSEEAPPPVVEEAPPPLPPEDTAPPPPEEQAPPPEGDAAPPPT) the composition is skewed to pro residues. Basic and acidic residues predominate over residues 66–75 (EAPHPEDPKL). Over residues 94 to 106 (SDEEVTLPEDEES) the composition is skewed to acidic residues. Residues 122–133 (SVLSDGISQSSR) are compositionally biased toward polar residues. The stretch at 145-169 (IPNLQETLKEKQARFREARENRKMK) forms a coiled coil. At Ser917 the chain carries Phosphoserine. Positions 1177–1201 (FQNNSRGSDQPPASGKPLKKEERSF) are disordered. Positions 1543 to 1567 (DVDIEKINAELQEFQNRCRKLPRAL) form a coiled coil. 4 AAA regions span residues 2049-2271 (YQNE…VLRT), 2331-2550 (SAVD…KLSL), 2657-2910 (FYPT…IWQG), and 3021-3275 (QFNE…YRRR). Residues 2087–2094 (GPAGTGKT) and 2369–2376 (GPSGSGKT) each bind ATP. The segment at 3290 to 3587 (YKSIYTDKVK…MDLLNDADMC (298 aa)) is stalk. Coiled coils occupy residues 3313 to 3405 (DKLM…ALNT), 3531 to 3583 (LKAN…LLND), and 3836 to 3871 (RVIL…DNLL). AAA regions lie at residues 3673 to 3903 (LVDP…EVSE) and 4118 to 4332 (ARKY…FIQN).

This sequence belongs to the dynein heavy chain family. In terms of assembly, consists of at least two heavy chains and a number of intermediate and light chains. In terms of tissue distribution, isoform 1 and/or isoform 2 are expressed in spermatocytes and mature sperm (at protein level). Testis-specific. Accumulates exclusively in mid to late spermatocytes.

The protein resides in the cytoplasm. The protein localises to the cytoskeleton. Its subcellular location is the flagellum axoneme. Functionally, force generating protein component of the outer dynein arms (ODAs) in the sperm flagellum. Produces force towards the minus ends of microtubules. Dynein has ATPase activity; the force-producing power stroke is thought to occur on release of ADP. Involved in sperm motility; implicated in sperm flagellar assembly. In Mus musculus (Mouse), this protein is Dynein axonemal heavy chain 8 (Dnah8).